The chain runs to 119 residues: Flagellar transcriptional regulator FlhD (119 aa).

This sequence belongs to the FlhD family. In terms of assembly, homodimer; disulfide-linked. Forms a heterohexamer composed of two FlhC and four FlhD subunits. Each FlhC binds a FlhD dimer, forming a heterotrimer, and a hexamer assembles by dimerization of two heterotrimers.

The protein localises to the cytoplasm. Functions in complex with FlhC as a master transcriptional regulator that regulates transcription of several flagellar and non-flagellar operons by binding to their promoter region. Activates expression of class 2 flagellar genes, including fliA, which is a flagellum-specific sigma factor that turns on the class 3 genes. Also regulates genes whose products function in a variety of physiological pathways. The polypeptide is Flagellar transcriptional regulator FlhD (Shigella dysenteriae serotype 1 (strain Sd197)).